The sequence spans 108 residues: Ig kappa chain V-V region NQ5-89.4 (108 aa).

The interval 1-23 (DIQMTQTTSSLSASLGHRVTITC) is framework-1. The cysteines at positions 23 and 88 are disulfide-linked. The tract at residues 24–34 (SASQDISNYLN) is complementarity-determining-1. The tract at residues 35–49 (WYQQKPDGTVKLLIY) is framework-2. A complementarity-determining-2 region spans residues 50-56 (YTSRLHS). Residues 57-88 (GVPSRFSGSGSATDYSLTITNLQQEDXATYXC) are framework-3. Positions 89–97 (QQGNTLPYT) are complementarity-determining-3. The interval 98–107 (FGGGTKLXIK) is framework-4.

In terms of biological role, anti-2-phenyl oxazolone (PHOX) Antibody. In Mus musculus (Mouse), this protein is Ig kappa chain V-V region NQ5-89.4.